Here is a 323-residue protein sequence, read N- to C-terminus: MIDFGNFYSLIAKNHLSHWLETLPAQIANWQREQQHGLFKQWSNAVEFLPEIKPYRLDLLHSVTAESEEPLSAGQIKRIETLMRNLMPWRKGPFSLYGVNIDTEWRSDWKWDRVLPHLSDLTGRTILDVGCGSGYHMWRMIGAGAHLAVGIDPTQLFLCQFEAVRKLLGNDQRAHLLPLGIEQLPALKAFDTVFSMGVLYHRRSPLEHLWQLKDQLVNEGELVLETLVIDGDENTVLVPGDRYAQMRNVYFIPSALALKNWLKKCGFVDIRIADVSVTTTEEQRRTEWMVTESLADFLDPHDPSKTVEGYPAPKRAVLIARKP.

Residues lysine 91, tryptophan 105, lysine 110, glycine 130, aspartate 152–threonine 154, isoleucine 181–glutamate 182, methionine 196, tyrosine 200, and arginine 315 contribute to the carboxy-S-adenosyl-L-methionine site.

The protein belongs to the class I-like SAM-binding methyltransferase superfamily. CmoB family. Homotetramer.

It carries out the reaction carboxy-S-adenosyl-L-methionine + 5-hydroxyuridine(34) in tRNA = 5-carboxymethoxyuridine(34) in tRNA + S-adenosyl-L-homocysteine + H(+). Its function is as follows. Catalyzes carboxymethyl transfer from carboxy-S-adenosyl-L-methionine (Cx-SAM) to 5-hydroxyuridine (ho5U) to form 5-carboxymethoxyuridine (cmo5U) at position 34 in tRNAs. This is tRNA U34 carboxymethyltransferase from Escherichia coli O7:K1 (strain IAI39 / ExPEC).